The following is a 206-amino-acid chain: Threonine efflux protein (206 aa).

The helical transmembrane segment at methionine 1–proline 21 threads the bilayer. Over aspartate 22–leucine 43 the chain is Periplasmic. A helical membrane pass occupies residues glycine 44–isoleucine 64. At glutamate 65–lysine 66 the chain is on the cytoplasmic side. Residues methionine 67–tyrosine 87 traverse the membrane as a helical segment. Over glutamine 88 to arginine 149 the chain is Periplasmic. The helical transmembrane segment at tryptophan 150–leucine 173 threads the bilayer. Residues proline 174 to arginine 206 are Cytoplasmic-facing.

Belongs to the Rht family.

Its subcellular location is the cell inner membrane. In terms of biological role, conducts the efflux of threonine. This Salmonella typhi protein is Threonine efflux protein (rhtC).